The primary structure comprises 516 residues: MTCPDKLGQLINWFVCSLCAPRVCKLWSSRRPRTRRNLLLGTACAIYLGFLVSQVGKGSFQHGQATNRGPPNNQDIFKVPFPEIPLDGTLAPPESQGNGSTLQPNVVYITLRSKRSKPANIRGTVKPKRRKKYAVASVAPDQEVLVRPSLIQPEVARAADAEVPGYVQGYLTKVGERPWRMLHGPRVRGSNLQQPRAPESNIRIYSESAPSWLSKEDIRRMRLLADGEVASILPTIFEGGTRLLMLEGSTSGSVPGCGPSPCGLLKQPLDMSEVFAFHLDRILGLNRTLPSVSRKLEFIQDGRPRPIILWDSSLVPSSNVSHSSVKITWGTYQQLLKQKCWLNGRVPRPEWGCTEVHHHEWSKMALFDFLLQIYNRLDTNCCGFRPRKEDACVQNGLRPNCEDQSSVTLAHIIQRKNDPRHLVFINNKGFFDRSEDNLNFKLLEGIREFPESAVSVLKSQHLRQKLLQSLFLDQVYWESQGGRQGIEKLIDVIERRARILITYINAHGARVLPMNE.

Residues 1-37 are Cytoplasmic-facing; sequence MTCPDKLGQLINWFVCSLCAPRVCKLWSSRRPRTRRN. Residues 38 to 55 traverse the membrane as a helical; Signal-anchor for type II membrane protein segment; the sequence is LLLGTACAIYLGFLVSQV. Over 56-516 the chain is Extracellular; it reads GKGSFQHGQA…HGARVLPMNE (461 aa). The N-linked (GlcNAc...) asparagine glycan is linked to asparagine 286.

Belongs to the GASK family.

It localises to the golgi apparatus membrane. The polypeptide is Golgi-associated kinase 1B (Rattus norvegicus (Rat)).